Here is a 316-residue protein sequence, read N- to C-terminus: Thiamine-monophosphate kinase (316 aa).

The Mg(2+) site is built by aspartate 26, threonine 49, and aspartate 50. Residue aspartate 57 coordinates substrate. Position 79 (aspartate 79) interacts with Mg(2+). Residues tyrosine 109, 126 to 127 (GD), and arginine 151 each bind ATP. Residue aspartate 127 participates in Mg(2+) binding. Position 198 (aspartate 198) interacts with Mg(2+). Serine 200 provides a ligand contact to ATP. A Mg(2+)-binding site is contributed by aspartate 201. Substrate contacts are provided by glutamate 251 and phenylalanine 305.

The protein belongs to the thiamine-monophosphate kinase family.

It carries out the reaction thiamine phosphate + ATP = thiamine diphosphate + ADP. The protein operates within cofactor biosynthesis; thiamine diphosphate biosynthesis; thiamine diphosphate from thiamine phosphate: step 1/1. Functionally, catalyzes the ATP-dependent phosphorylation of thiamine-monophosphate (TMP) to form thiamine-pyrophosphate (TPP), the active form of vitamin B1. The protein is Thiamine-monophosphate kinase of Rhodopirellula baltica (strain DSM 10527 / NCIMB 13988 / SH1).